We begin with the raw amino-acid sequence, 59 residues long: Large ribosomal subunit protein uL30 (59 aa).

It belongs to the universal ribosomal protein uL30 family. Part of the 50S ribosomal subunit.

The polypeptide is Large ribosomal subunit protein uL30 (Sodalis glossinidius (strain morsitans)).